A 105-amino-acid polypeptide reads, in one-letter code: Vacuolar ATPase assembly integral membrane protein VMA21 homolog (105 aa).

The segment at 1–26 (MSTKNKKAAGGNGGAPKQTRQQSHDS) is disordered. Residues 1 to 36 (MSTKNKKAAGGNGGAPKQTRQQSHDSQDYSSFKTVL) lie on the Cytoplasmic side of the membrane. The helical transmembrane segment at 37–57 (FYCMLIVFLPVLTFFVLKGFV) threads the bilayer. Topologically, residues 58–68 (LDQFLDISEVK) are lumenal. Residues 69–89 (VNIASAVGAVVALHVALGLYI) traverse the membrane as a helical segment. Topologically, residues 90–105 (YRAYFGAPGSKASKTD) are cytoplasmic.

It belongs to the VMA21 family.

The protein resides in the endoplasmic reticulum membrane. Its subcellular location is the endoplasmic reticulum-Golgi intermediate compartment membrane. It is found in the cytoplasmic vesicle. It localises to the COPII-coated vesicle membrane. In terms of biological role, required for the assembly of the V0 complex of the vacuolar ATPase (V-ATPase) in the endoplasmic reticulum. This is Vacuolar ATPase assembly integral membrane protein VMA21 homolog from Drosophila yakuba (Fruit fly).